Consider the following 134-residue polypeptide: Small ribosomal subunit protein uS11 (134 aa).

Residues 115–134 are disordered; the sequence is VTPIPTDSTRRKGGRRGRRL. Positions 125 to 134 are enriched in basic residues; it reads RKGGRRGRRL.

The protein belongs to the universal ribosomal protein uS11 family.

The chain is Small ribosomal subunit protein uS11 (RPS14) from Syntrichia ruralis (Great hairy screw-moss).